We begin with the raw amino-acid sequence, 798 residues long: Nuclear cap-binding protein subunit 1 (798 aa).

Residues 28-241 enclose the MIF4G domain; that stretch reads EKKLQGVIGK…SLSAQIEALR (214 aa). The segment at 663-686 is disordered; the sequence is NKIKEEDDEESDIKMDEDETKEEK. Residues 668–682 are compositionally biased toward acidic residues; the sequence is EDDEESDIKMDEDET.

It belongs to the NCBP1 family. In terms of assembly, component of the nuclear cap-binding complex (CBC), a heterodimer composed of ncbp-1 and ncbp-1 that interacts with m7GpppG-capped RNA.

The protein resides in the nucleus. Component of the cap-binding complex (CBC), which binds cotranscriptionally to the 5'-cap of pre-mRNAs and is involved in various processes such as pre-mRNA splicing and RNA-mediated gene silencing (RNAi). The CBC complex is involved in miRNA-mediated RNA interference and is required for primary microRNAs (miRNAs) processing. In the CBC complex, ncbp-1 does not bind directly capped RNAs (m7GpppG-capped RNA) but is required to stabilize the movement of the N-terminal loop of ncbp-2 and lock the CBC into a high affinity cap-binding state with the cap structure. In Caenorhabditis elegans, this protein is Nuclear cap-binding protein subunit 1 (ncbp-1).